Reading from the N-terminus, the 225-residue chain is MTKLKDWPNQERPREKLLQKGTAALSDAELLAIFLRTGCRGVDVVTLSKQLLSQFGSLHALFAASESDFCEKKGLGQAKYVQLQAVLEMSSRYLQEPLSKGNALTSAAQTKAFLIAKMHNLPYEVFAAILLDTQHRIIRFHEFFFGSIDCATVHPRIIAQKVLSENAAAIILVHNHPSGDPSASEADKMITQKIVSALQLIDVRVLDHLVVGHKKCTSFAENGWI.

Residues Ala-103–Ile-225 enclose the MPN domain. Zn(2+) is bound by residues His-174, His-176, and Asp-187. The short motif at His-174 to Asp-187 is the JAMM motif element.

This sequence belongs to the UPF0758 family.

This is UPF0758 protein Ping_0056 from Psychromonas ingrahamii (strain DSM 17664 / CCUG 51855 / 37).